The sequence spans 757 residues: Cellulose synthase-like protein B2 (757 aa).

A run of 2 helical transmembrane segments spans residues 24–44 (AVDLTILGLLFSLLLHRILYM) and 48–68 (GIIWLVAFLCESCFSFVWLLS). Residues D136 and D461 contribute to the active site. A run of 6 helical transmembrane segments spans residues 533–555 (AYLCVSICVRSIPELIYCLLPAY), 568–588 (LCLGITMLLAGMHCLYTLWEF), 607–627 (IVATSSWLFSIFDIILKLLGL), 672–692 (FLPGTFIVLVNLAALVGVFVG), 704–724 (GSGLGEACACILVVMLFFPFL), and 735–755 (IPLSTLSKAGFLAVSFVVFSV).

Belongs to the glycosyltransferase 2 family. Plant cellulose synthase-like B subfamily. Expressed in young seedlings, primarily in the root vascular tissue.

It localises to the golgi apparatus membrane. Thought to be a Golgi-localized beta-glycan synthase that polymerize the backbones of noncellulosic polysaccharides (hemicelluloses) of plant cell wall. This chain is Cellulose synthase-like protein B2 (CSLB2), found in Arabidopsis thaliana (Mouse-ear cress).